Here is a 1258-residue protein sequence, read N- to C-terminus: Cohesin subunit SA-1 (1258 aa).

The disordered stretch occupies residues 1–84; that stretch reads MITSELPVLQ…HPQQNGEGEP (84 aa). The span at 10–19 shows a compositional bias: polar residues; sequence QDSTNETTAH. S24 is modified (phosphoserine). A compositionally biased stretch (basic and acidic residues) spans 53 to 62; it reads SPGEKSRIEA. The 86-residue stretch at 296-381 folds into the SCD domain; sequence FVHRYRDAIA…NRFKDRIVSM (86 aa). Residues S756, S1062, and S1065 each carry the phosphoserine modification. 2 disordered regions span residues 1055 to 1096 and 1129 to 1148; these read GGED…SLDN and MGDQ…DFLH. Positions 1062-1074 are enriched in low complexity; the sequence is SVNSGSSSSKTSS. Residues 1076–1087 show a composition bias toward basic residues; the sequence is RNKKGRPPLHKK. S1093 carries the phosphoserine modification. The segment covering 1137 to 1146 has biased composition (basic and acidic residues); that stretch reads ESEHGSEPDF. A Glycyl lysine isopeptide (Lys-Gly) (interchain with G-Cter in SUMO2) cross-link involves residue K1161.

The protein belongs to the SCC3 family. As to quaternary structure, cohesin complexes are composed of a heterodimer between a SMC1 protein (SMC1A or SMC1B) and SMC3, which are attached via their hinge domain, and RAD21 which link them at their heads, and one STAG protein (STAG1, STAG2 or STAG3). In cohesin complexes, STAG1 is mutually exclusive with STAG2 and STAG3. Interacts directly with RAD21 in cohesin complex. The cohesin complex interacts with the cohesin loading complex subunits NIPBL/Scc2 (via HEAT repeats) and MAU2/Scc4. NIPBL directly contacts all members of the complex, RAD21, SMC1A/B, SMC3 and STAG1. In terms of processing, phosphorylated by PLK1. The large dissociation of cohesin from chromosome arms during prophase is partly due to its phosphorylation.

Its subcellular location is the nucleus. The protein localises to the chromosome. It is found in the centromere. Functionally, component of cohesin complex, a complex required for the cohesion of sister chromatids after DNA replication. The cohesin complex apparently forms a large proteinaceous ring within which sister chromatids can be trapped. At anaphase, the complex is cleaved and dissociates from chromatin, allowing sister chromatids to segregate. The cohesin complex may also play a role in spindle pole assembly during mitosis. This is Cohesin subunit SA-1 (STAG1) from Homo sapiens (Human).